A 189-amino-acid polypeptide reads, in one-letter code: Threonylcarbamoyl-AMP synthase (189 aa).

The YrdC-like domain occupies 6-189 (TAIFTPIIDA…VLTGEQIRQG (184 aa)).

This sequence belongs to the SUA5 family. TsaC subfamily.

The protein resides in the cytoplasm. It catalyses the reaction L-threonine + hydrogencarbonate + ATP = L-threonylcarbamoyladenylate + diphosphate + H2O. Its function is as follows. Required for the formation of a threonylcarbamoyl group on adenosine at position 37 (t(6)A37) in tRNAs that read codons beginning with adenine. Catalyzes the conversion of L-threonine, HCO(3)(-)/CO(2) and ATP to give threonylcarbamoyl-AMP (TC-AMP) as the acyladenylate intermediate, with the release of diphosphate. This is Threonylcarbamoyl-AMP synthase from Serratia proteamaculans (strain 568).